A 668-amino-acid chain; its full sequence is MNQNIIYTVYGDLKLTLKNMRPDVLLHNPVMFLTEVSLFVSIFIYIFPSFFGVPYTGTYRSFYVAVVVLLFLTVFFSSISTALSEGKSKAITDSLKKFKTDVIAHVQKDGNIVDVRSNELKKNDIIIIYKDEIVPIDGEVIEGSGYVDESNVTGESRAVMKVIGDTVTGSTRLVTDKLKIRATADPGSTFIDKMIELVEKSTREKTPNEISLTVFLSGLTLIFLVITASIFAISHYFGRTANIVMLIVLLIALIPTTIGALLPAIGIAAINKVSEYNIIAKSGRAIENAGDIDTIILDKTGTITIGERKAVKFYPNKGISDVEFAKLAAMSSYYDQTKEGLSIFELAKKQGAEISKDDLKGYEFIPFSSETKFSGIQSPSDTVIKGSLKALKEKFQVADEFIEALCKEISMRGGTAIPVVHNGKFAGVIELQDLIKPGIKERISEIKNMDIKTVMCTGDDEVTAQYISAQAGIDEYIANSKPVDKYNVVIREKEGQRMVAMVGDGTNDAPALAKADVGLAMNNGTQAAKEAANMIDLDSNPTKLMDVIFLGKQILITRGSLTTFSIANDISKYFVIIPAIFYMFPSLSLVNILDLTDPIVAVTSALIFNTIIIVFLIPLALGGVHYKPTSISEMLKRNLMIYGIGGVITPFIAIKLIYMLLIAWGVTW.

4 consecutive transmembrane segments (helical) span residues 31–51, 62–82, 213–233, and 243–263; these read MFLT…PSFF, FYVA…ISTA, TVFL…IFAI, and IVML…ALLP. Asp298 acts as the 4-aspartylphosphate intermediate in catalysis. ATP is bound by residues Asp335, Glu339, 367–374, and Lys385; that span reads FSSETKFS. Residues Asp504 and Asp508 each contribute to the Mg(2+) site. The next 3 membrane-spanning stretches (helical) occupy residues 573-593, 599-619, and 644-664; these read YFVI…VNIL, IVAV…LIPL, and IGGV…LIAW.

It belongs to the cation transport ATPase (P-type) (TC 3.A.3) family. Type IA subfamily. The system is composed of three essential subunits: KdpA, KdpB and KdpC.

It is found in the cell membrane. It carries out the reaction K(+)(out) + ATP + H2O = K(+)(in) + ADP + phosphate + H(+). In terms of biological role, part of the high-affinity ATP-driven potassium transport (or Kdp) system, which catalyzes the hydrolysis of ATP coupled with the electrogenic transport of potassium into the cytoplasm. This subunit is responsible for energy coupling to the transport system and for the release of the potassium ions to the cytoplasm. This chain is Potassium-transporting ATPase ATP-binding subunit, found in Thermoplasma volcanium (strain ATCC 51530 / DSM 4299 / JCM 9571 / NBRC 15438 / GSS1).